We begin with the raw amino-acid sequence, 316 residues long: tRNA dimethylallyltransferase (316 aa).

Position 17-24 (17-24 (GPTASGKT)) interacts with ATP. Substrate is bound at residue 19–24 (TASGKT). Interaction with substrate tRNA stretches follow at residues 42–45 (DSAL), 166–170 (QRLSR), 247–252 (RCVGYR), and 280–287 (KRQITWLR).

Belongs to the IPP transferase family. As to quaternary structure, monomer. The cofactor is Mg(2+).

It catalyses the reaction adenosine(37) in tRNA + dimethylallyl diphosphate = N(6)-dimethylallyladenosine(37) in tRNA + diphosphate. Its function is as follows. Catalyzes the transfer of a dimethylallyl group onto the adenine at position 37 in tRNAs that read codons beginning with uridine, leading to the formation of N6-(dimethylallyl)adenosine (i(6)A). This chain is tRNA dimethylallyltransferase, found in Shigella flexneri serotype 5b (strain 8401).